Consider the following 330-residue polypeptide: D-alanine--D-alanine ligase (330 aa).

The region spanning 120–326 is the ATP-grasp domain; it reads KLWYDALGIP…FKTFLQKAVL (207 aa). 150 to 205 contributes to the ATP binding site; the sequence is AFKQWGGLFVKAACQGSSVGCYKVTSEEELAQAINGAFGYSQQVLVEKAVKPRELE. Mg(2+) contacts are provided by Asp280, Glu293, and Asn295.

Belongs to the D-alanine--D-alanine ligase family. Requires Mg(2+) as cofactor. Mn(2+) is required as a cofactor.

The protein resides in the cytoplasm. It carries out the reaction 2 D-alanine + ATP = D-alanyl-D-alanine + ADP + phosphate + H(+). It functions in the pathway cell wall biogenesis; peptidoglycan biosynthesis. In terms of biological role, cell wall formation. The protein is D-alanine--D-alanine ligase of Aliivibrio fischeri (strain MJ11) (Vibrio fischeri).